A 254-amino-acid polypeptide reads, in one-letter code: GTP cyclohydrolase III (254 aa).

Belongs to the archaeal-type GTP cyclohydrolase family.

The enzyme catalyses GTP + 3 H2O = 2-amino-5-formylamino-6-(5-phospho-D-ribosylamino)pyrimidin-4(3H)-one + 2 phosphate + 2 H(+). Catalyzes the formation of 2-amino-5-formylamino-6-ribofuranosylamino-4(3H)-pyrimidinone ribonucleotide monophosphate and inorganic phosphate from GTP. Also has an independent pyrophosphate phosphohydrolase activity. The protein is GTP cyclohydrolase III of Methanobrevibacter smithii (strain ATCC 35061 / DSM 861 / OCM 144 / PS).